Reading from the N-terminus, the 625-residue chain is tRNA-guanine(15) transglycosylase (625 aa).

Residue Asp-86 is the Nucleophile of the active site. Substrate contacts are provided by Asp-121 and Gly-184. Positions 546-621 (GLRVVVDDES…VAVKVHEGVN (76 aa)) constitute a PUA domain.

It belongs to the archaeosine tRNA-ribosyltransferase family. Zn(2+) serves as cofactor.

The enzyme catalyses guanosine(15) in tRNA + 7-cyano-7-deazaguanine = 7-cyano-7-carbaguanosine(15) in tRNA + guanine. It functions in the pathway tRNA modification; archaeosine-tRNA biosynthesis. Exchanges the guanine residue with 7-cyano-7-deazaguanine (preQ0) at position 15 in the dihydrouridine loop (D-loop) of archaeal tRNAs. The sequence is that of tRNA-guanine(15) transglycosylase from Picrophilus torridus (strain ATCC 700027 / DSM 9790 / JCM 10055 / NBRC 100828 / KAW 2/3).